The chain runs to 230 residues: Sugar fermentation stimulation protein homolog (230 aa).

This sequence belongs to the SfsA family.

The chain is Sugar fermentation stimulation protein homolog from Clostridium perfringens (strain ATCC 13124 / DSM 756 / JCM 1290 / NCIMB 6125 / NCTC 8237 / Type A).